A 303-amino-acid polypeptide reads, in one-letter code: MSEPQPDLEPPQHGLYMLFLLVLVFFLMGLVGFMICHVLKKKGYRCRTSRGSEPDDAQLQPPEDDDMNEDTVERIVRCIIQNEANAEALKEMLGDSEGEGTVQLSSVDATSSLQDGAPSHHHTVHLGSSAPCIHCSRNKRPPLVRQGRSKEGKSRPRPGETTVFSVGRFRVTHIEKRYGLHEHRDGSPTDRSWGSGGGQDPGGGQGPGGGQPRTGMPAIESLPPERPQPPALASTPMQNGGLRDSSRVPRALEGNPGASAEPMLGAGGRGPSPGPARKEANGQPSKQDTSDHQVSPPRGAGGV.

The helical transmembrane segment at 15–35 threads the bilayer; it reads LYMLFLLVLVFFLMGLVGFMI. Disordered regions lie at residues 46 to 67 and 111 to 303; these read CRTSRGSEPDDAQLQPPEDDDM and SSLQ…AGGV. Phosphoserine is present on Ser-52. Basic and acidic residues-rich tracts occupy residues 148–158 and 172–188; these read RSKEGKSRPRP and THIEKRYGLHEHRDGSP. Residues 194–212 show a composition bias toward gly residues; it reads GSGGGQDPGGGQGPGGGQP.

Belongs to the RELT family. In terms of assembly, interacts with RELT, RELL1, OXSR1, PLSCR1 and TRAF2.

The protein localises to the cell membrane. Its function is as follows. Induces activation of MAPK14/p38 cascade, when overexpressed. Induces apoptosis, when overexpressed. This is RELT-like protein 2 (RELL2) from Bos taurus (Bovine).